A 173-amino-acid chain; its full sequence is Alkyl hydroperoxide reductase AhpD (173 aa).

Catalysis depends on cysteine 131, which acts as the Proton donor. A disulfide bridge connects residues cysteine 131 and cysteine 134. Catalysis depends on cysteine 134, which acts as the Cysteine sulfenic acid (-SOH) intermediate.

Belongs to the AhpD family.

It carries out the reaction N(6)-[(R)-dihydrolipoyl]-L-lysyl-[lipoyl-carrier protein] + a hydroperoxide = N(6)-[(R)-lipoyl]-L-lysyl-[lipoyl-carrier protein] + an alcohol + H2O. In terms of biological role, antioxidant protein with alkyl hydroperoxidase activity. Required for the reduction of the AhpC active site cysteine residues and for the regeneration of the AhpC enzyme activity. The polypeptide is Alkyl hydroperoxide reductase AhpD (Rhizorhabdus wittichii (strain DSM 6014 / CCUG 31198 / JCM 15750 / NBRC 105917 / EY 4224 / RW1) (Sphingomonas wittichii)).